A 221-amino-acid chain; its full sequence is Chalcone--flavanone isomerase (221 aa).

Substrate-binding residues include Thr50, Asn115, and Thr192.

Belongs to the chalcone isomerase family.

It catalyses the reaction a chalcone = a flavanone.. The protein operates within secondary metabolite biosynthesis; flavonoid biosynthesis. Its function is as follows. Catalyzes the intramolecular cyclization of bicyclic chalcones into tricyclic (S)-flavanones. Responsible for the isomerization of 4,2',4',6'-tetrahydroxychalcone (also termed chalcone) into naringenin. The chain is Chalcone--flavanone isomerase (CHI) from Phaseolus vulgaris (Kidney bean).